The sequence spans 146 residues: Transcription antitermination protein NusB (146 aa).

The protein belongs to the NusB family.

In terms of biological role, involved in transcription antitermination. Required for transcription of ribosomal RNA (rRNA) genes. Binds specifically to the boxA antiterminator sequence of the ribosomal RNA (rrn) operons. This is Transcription antitermination protein NusB from Koribacter versatilis (strain Ellin345).